The sequence spans 92 residues: Small ribosomal subunit protein uS19c (92 aa).

This sequence belongs to the universal ribosomal protein uS19 family.

The protein localises to the plastid. It localises to the chloroplast. Functionally, protein S19 forms a complex with S13 that binds strongly to the 16S ribosomal RNA. This chain is Small ribosomal subunit protein uS19c, found in Eucalyptus globulus subsp. globulus (Tasmanian blue gum).